The primary structure comprises 306 residues: tRNA pseudouridine synthase B (306 aa).

The active-site Nucleophile is aspartate 48.

Belongs to the pseudouridine synthase TruB family. Type 1 subfamily.

The catalysed reaction is uridine(55) in tRNA = pseudouridine(55) in tRNA. In terms of biological role, responsible for synthesis of pseudouridine from uracil-55 in the psi GC loop of transfer RNAs. The protein is tRNA pseudouridine synthase B of Ectopseudomonas mendocina (strain ymp) (Pseudomonas mendocina).